The sequence spans 58 residues: Attractin (58 aa).

3 disulfide bridges follow: cysteine 4–cysteine 41, cysteine 13–cysteine 33, and cysteine 20–cysteine 26. A glycan (N-linked (GlcNAc...) asparagine) is linked at asparagine 8.

Produced by the albumen gland of the egg cordons.

Its subcellular location is the secreted. Its function is as follows. Water-borne pheromone that attract the marine mollusk Aplysia into breeding aggregations and coordinate male and female reproductive behavior within the aggregation. In Aplysia fasciata (Mottled sea hare), this protein is Attractin (ATT).